Reading from the N-terminus, the 459-residue chain is Adenylosuccinate synthetase isozyme 1 C (459 aa).

The segment at 1 to 31 (MSFSWSAKDHKSYTNPPSNPTQGLKRPRNDT) is disordered. Residues 13–22 (YTNPPSNPTQ) are compositionally biased toward polar residues. Residues 44 to 50 (GDEGKGK) and 72 to 74 (GHT) contribute to the GTP site. The active-site Proton acceptor is the Asp45. Residues Asp45 and Gly72 each contribute to the Mg(2+) site. Residue Asp45 coordinates substrate. IMP is bound by residues 45-48 (DEGK), 70-73 (NAGH), Thr165, Arg179, Asn258, Thr273, and Arg337. The active-site Proton donor is the His73. A substrate-binding site is contributed by 333–339 (VTTGRKR). GTP is bound by residues Arg339, 365–367 (KLD), and 447–450 (GVGK).

It belongs to the adenylosuccinate synthetase family. Homodimer. Mg(2+) serves as cofactor.

The protein localises to the cytoplasm. It carries out the reaction IMP + L-aspartate + GTP = N(6)-(1,2-dicarboxyethyl)-AMP + GDP + phosphate + 2 H(+). It functions in the pathway purine metabolism; AMP biosynthesis via de novo pathway; AMP from IMP: step 1/2. In terms of biological role, component of the purine nucleotide cycle (PNC), which interconverts IMP and AMP to regulate the nucleotide levels in various tissues, and which contributes to glycolysis and ammoniagenesis. Catalyzes the first committed step in the biosynthesis of AMP from IMP. The polypeptide is Adenylosuccinate synthetase isozyme 1 C (adss1c) (Salmo salar (Atlantic salmon)).